Here is a 337-residue protein sequence, read N- to C-terminus: Phosphoenolpyruvate transferase (337 aa).

Asp69 lines the 7,8-didemethyl-8-hydroxy-5-deazariboflavin pocket.

This sequence belongs to the CofD family. As to quaternary structure, homodimer. Mg(2+) serves as cofactor.

It catalyses the reaction enolpyruvoyl-2-diphospho-5'-guanosine + 7,8-didemethyl-8-hydroxy-5-deazariboflavin = dehydro coenzyme F420-0 + GMP + H(+). It functions in the pathway cofactor biosynthesis; coenzyme F420 biosynthesis. Catalyzes the transfer of the phosphoenolpyruvate moiety from enoylpyruvoyl-2-diphospho-5'-guanosine (EPPG) to 7,8-didemethyl-8-hydroxy-5-deazariboflavin (FO) with the formation of dehydro coenzyme F420-0 and GMP. The polypeptide is Phosphoenolpyruvate transferase (Mycobacterium avium (strain 104)).